The primary structure comprises 830 residues: Frameshifted structural polyprotein (830 aa).

A disordered region spans residues 58 to 109; that stretch reads AIAPARPPKPKKKKTTKPKPKTQPKKINGKTQQQKKKDKQADKKKKKPGKRE. The segment covering 65-107 has biased composition (basic residues); it reads PKPKKKKTTKPKPKTQPKKINGKTQQQKKKDKQADKKKKKPGK. Positions 94–106 are ribosome-binding; it reads KDKQADKKKKKPG. C119 and C134 are joined by a disulfide. Positions 119 to 267 constitute a Peptidase S3 domain; that stretch reads CIFEVKHEGK…RVTPEGSEEW (149 aa). Active-site charge relay system residues include H145, D167, and S219. N280, N327, N533, and N595 each carry an N-linked (GlcNAc...) asparagine; by host glycan. The helical transmembrane segment at 702 to 722 threads the bilayer; the sequence is AVVGMSLLALISIFASCYMLV. Residues C718, C728, C748, and C749 are each lipidated (S-palmitoyl cysteine; by host). Positions 728–748 are transient transmembrane before p62-6K protein processing; sequence CLTPYALTPGAAVPWTLGILC. 2 helical membrane passes run 771 to 791 and 793 to 813; these read ALFWLEFAAPVACILIITYCL and NVLCCCKSLSFLSATEPRGHR.

In terms of assembly, homodimer. Homomultimer. Interacts with host karyopherin KPNA4; this interaction allows the nuclear import of the viral capsid protein. Precursor of protein E3/E2: The precursor of protein E3/E2 and E1 form a heterodimer shortly after synthesis. Interacts with host IRAK1; the interaction leads to inhibition of IRAK1-dependent signaling. Processing of the precursor of protein E3/E2 into E2 and E3 results in a heterodimer of the spike glycoproteins E2 and E1. Spike at virion surface are constituted of three E2-E1 heterodimers. Interacts with 6K protein. Interacts with host MXRA8; this interaction mediates virus entry. In terms of processing, specific enzymatic cleavages in vivo yield mature proteins. Capsid protein is auto-cleaved during polyprotein translation, unmasking a signal peptide at the N-terminus of the precursor of E3/E2. The remaining polyprotein is then targeted to the host endoplasmic reticulum, where host signal peptidase cleaves it into pE2 and TF. pE2 is further processed to mature E3 and E2 by host furin in trans-Golgi vesicle.

The protein localises to the virion. It is found in the host cytoplasm. The protein resides in the host cell membrane. It localises to the host nucleus. Its subcellular location is the virion membrane. The enzyme catalyses Autocatalytic release of the core protein from the N-terminus of the togavirus structural polyprotein by hydrolysis of a -Trp-|-Ser- bond.. In terms of biological role, forms an icosahedral capsid with a T=4 symmetry composed of 240 copies of the capsid protein surrounded by a lipid membrane through which penetrate 80 spikes composed of trimers of E1-E2 heterodimers. The capsid protein binds to the viral RNA genome at a site adjacent to a ribosome binding site for viral genome translation following genome release. Possesses a protease activity that results in its autocatalytic cleavage from the nascent structural protein. Following its self-cleavage, the capsid protein transiently associates with ribosomes, and within several minutes the protein binds to viral RNA and rapidly assembles into icosahedric core particles. The resulting nucleocapsid eventually associates with the cytoplasmic domain of the spike glycoprotein E2 at the cell membrane, leading to budding and formation of mature virions. In case of infection, new virions attach to target cells and after clathrin-mediated endocytosis their membrane fuses with the host endosomal membrane. This leads to the release of the nucleocapsid into the cytoplasm, followed by an uncoating event necessary for the genomic RNA to become accessible. The uncoating might be triggered by the interaction of capsid proteins with ribosomes. Binding of ribosomes would release the genomic RNA since the same region is genomic RNA-binding and ribosome-binding. Specifically inhibits interleukin-1 receptor-associated kinase 1/IRAK1-dependent signaling during viral entry, representing a means by which the alphaviruses may evade innate immune detection and activation prior to viral gene expression. Functionally, provides the signal sequence for p62 (E3/E2) translocation to the host endoplasmic reticulum. Mediates pH protection of E1 during secretory pathway trans- port. Its function is as follows. Plays a role in viral attachment to target host cell, by binding to the cell receptor. Synthesized as a p62 precursor which is processed by furin at the cell membrane just before virion budding, giving rise to E2-E1 heterodimer. The p62-E1 heterodimer is stable, whereas E2-E1 is unstable and dissociate at low pH. p62 is processed at the last step, presumably to avoid E1 fusion activation before its final export to cell surface. E2 C-terminus contains a transitory transmembrane that would be disrupted by palmitoylation, resulting in reorientation of the C-terminal tail from lumenal to cytoplasmic side. This step is critical since E2 C-terminus is involved in budding by interacting with capsid proteins. This release of E2 C-terminus in cytoplasm occurs lately in protein export, and precludes premature assembly of particles at the endoplasmic reticulum membrane. Virion component that may play a role during viral assembly. In Aedes (Middle-African hedgehog), this protein is Frameshifted structural polyprotein.